A 101-amino-acid polypeptide reads, in one-letter code: NAD(P)H-quinone oxidoreductase subunit 4L, chloroplastic (101 aa).

3 helical membrane passes run 2-22, 32-52, and 61-81; these read MLEH…YGLI, MCLE…SDFF, and IFSI…SAIV.

It belongs to the complex I subunit 4L family. NDH is composed of at least 16 different subunits, 5 of which are encoded in the nucleus.

Its subcellular location is the plastid. The protein localises to the chloroplast thylakoid membrane. It catalyses the reaction a plastoquinone + NADH + (n+1) H(+)(in) = a plastoquinol + NAD(+) + n H(+)(out). The enzyme catalyses a plastoquinone + NADPH + (n+1) H(+)(in) = a plastoquinol + NADP(+) + n H(+)(out). Functionally, NDH shuttles electrons from NAD(P)H:plastoquinone, via FMN and iron-sulfur (Fe-S) centers, to quinones in the photosynthetic chain and possibly in a chloroplast respiratory chain. The immediate electron acceptor for the enzyme in this species is believed to be plastoquinone. Couples the redox reaction to proton translocation, and thus conserves the redox energy in a proton gradient. This chain is NAD(P)H-quinone oxidoreductase subunit 4L, chloroplastic, found in Citrus sinensis (Sweet orange).